Reading from the N-terminus, the 68-residue chain is DNA gyrase inhibitor YacG (68 aa).

Cys10, Cys13, Cys29, and Cys33 together coordinate Zn(2+). The segment at 45-68 (EKRIPSDTELSDSDEWSEEDPLKH) is disordered. Acidic residues predominate over residues 53–68 (ELSDSDEWSEEDPLKH).

Belongs to the DNA gyrase inhibitor YacG family. As to quaternary structure, interacts with GyrB. The cofactor is Zn(2+).

Its function is as follows. Inhibits all the catalytic activities of DNA gyrase by preventing its interaction with DNA. Acts by binding directly to the C-terminal domain of GyrB, which probably disrupts DNA binding by the gyrase. This chain is DNA gyrase inhibitor YacG, found in Yersinia pseudotuberculosis serotype O:1b (strain IP 31758).